Here is a 428-residue protein sequence, read N- to C-terminus: Adenylosuccinate synthetase (428 aa).

Residues 12 to 18 (GDEGKGK) and 40 to 42 (GHT) contribute to the GTP site. The Proton acceptor role is filled by Asp13. The Mg(2+) site is built by Asp13 and Gly40. Residues 13–16 (DEGK), 38–41 (NAGH), Thr128, Arg142, Gln223, Thr238, and Arg302 contribute to the IMP site. His41 functions as the Proton donor in the catalytic mechanism. Residue 298-304 (VTTGRPR) coordinates substrate. Residues Arg304, 330–332 (KLD), and 412–414 (GTG) each bind GTP.

The protein belongs to the adenylosuccinate synthetase family. Homodimer. Mg(2+) serves as cofactor.

Its subcellular location is the cytoplasm. It catalyses the reaction IMP + L-aspartate + GTP = N(6)-(1,2-dicarboxyethyl)-AMP + GDP + phosphate + 2 H(+). The protein operates within purine metabolism; AMP biosynthesis via de novo pathway; AMP from IMP: step 1/2. Functionally, plays an important role in the de novo pathway of purine nucleotide biosynthesis. Catalyzes the first committed step in the biosynthesis of AMP from IMP. The sequence is that of Adenylosuccinate synthetase from Bifidobacterium animalis subsp. lactis (strain AD011).